The sequence spans 244 residues: Small ribosomal subunit protein uS3 (244 aa).

In terms of domain architecture, KH type-2 spans 39 to 110 (IRNFIQKKYS…QVRINVVEVE (72 aa)). The tract at residues 221 to 244 (GAIPRRKGSRKPQQFEDRSSNENS) is disordered. Positions 233–244 (QQFEDRSSNENS) are enriched in basic and acidic residues.

Belongs to the universal ribosomal protein uS3 family. Part of the 30S ribosomal subunit. Forms a tight complex with proteins S10 and S14.

Binds the lower part of the 30S subunit head. Binds mRNA in the 70S ribosome, positioning it for translation. This Prochlorococcus marinus (strain MIT 9515) protein is Small ribosomal subunit protein uS3.